The primary structure comprises 107 residues: YcgL domain-containing protein Psyc_0800 (107 aa).

In terms of domain architecture, YcgL spans 1–95 (MHCDIYKFLK…QDVMRRQAEL (95 aa)).

This chain is YcgL domain-containing protein Psyc_0800, found in Psychrobacter arcticus (strain DSM 17307 / VKM B-2377 / 273-4).